The following is a 23-amino-acid chain: Laccase-1 (23 aa).

This sequence belongs to the multicopper oxidase family. It depends on Cu cation as a cofactor.

The protein resides in the secreted. The catalysed reaction is 4 hydroquinone + O2 = 4 benzosemiquinone + 2 H2O. Its activity is regulated as follows. Strongly inhibited by sodium azide, sodium cyanide, Li(+), Sn(+), Hg(2+), and the disulfide-reducing agents beta-mercaptoethanol, dithiothreitol and thioglycolic acid. Moderately inhibited by Mn(2+) and Fe(2+), inhibition by these metal ions is stronger at 0.1 mM than at 1 mM. Moderately inhibited by Cu(2+). Lignin degradation and detoxification of lignin-derived products. Demethylates eucalyptus hard wood lignin. Has high activity against the non-phenolic heterocyclic compound ABTS, and lower activity against the phenolic substrates syringic acid, caffeic acid, syringaldazine, vanillic acid, catechol and levodihydroxyphenylalanine. The polypeptide is Laccase-1 (Galerina sp).